We begin with the raw amino-acid sequence, 225 residues long: Membrane protein LapB (225 aa).

It to H.influenzae HI_1119.

The protein localises to the cell membrane. The sequence is that of Membrane protein LapB (lapB) from Mannheimia haemolytica (Pasteurella haemolytica).